The chain runs to 570 residues: Pyruvate decarboxylase (570 aa).

Positions 1-2 are cleaved as a propeptide — removed in mature form; sequence MV. Substrate is bound by residues D33 and H120. A thiamine pyrophosphate binding region spans residues 394–476; that stretch reads DSWFNGIQLK…MLINNRGYTI (83 aa). Residues D444, N471, and G473 each coordinate Mg(2+). Substrate is bound at residue E477.

The protein belongs to the TPP enzyme family. As to quaternary structure, homomer. It depends on a metal cation as a cofactor. Thiamine diphosphate serves as cofactor.

It localises to the cytoplasm. It carries out the reaction a 2-oxocarboxylate + H(+) = an aldehyde + CO2. Its pathway is carbohydrate metabolism; pyruvate metabolism. In Neurospora crassa (strain ATCC 24698 / 74-OR23-1A / CBS 708.71 / DSM 1257 / FGSC 987), this protein is Pyruvate decarboxylase (cfp).